The chain runs to 193 residues: Xanthine phosphoribosyltransferase (193 aa).

The xanthine site is built by L20 and T27. A128 to A132 contacts 5-phospho-alpha-D-ribose 1-diphosphate. Residue K156 coordinates xanthine.

This sequence belongs to the purine/pyrimidine phosphoribosyltransferase family. Xpt subfamily. Homodimer.

Its subcellular location is the cytoplasm. The catalysed reaction is XMP + diphosphate = xanthine + 5-phospho-alpha-D-ribose 1-diphosphate. It functions in the pathway purine metabolism; XMP biosynthesis via salvage pathway; XMP from xanthine: step 1/1. Its function is as follows. Converts the preformed base xanthine, a product of nucleic acid breakdown, to xanthosine 5'-monophosphate (XMP), so it can be reused for RNA or DNA synthesis. This chain is Xanthine phosphoribosyltransferase, found in Streptococcus pneumoniae (strain P1031).